A 142-amino-acid polypeptide reads, in one-letter code: Baculoviral IAP repeat-containing protein 5 (142 aa).

A BIR repeat occupies 18-88; that stretch reads RVSTFKNWPF…KHSSGCAFLS (71 aa). Ser-20 is modified (phosphoserine; by AURKC). Position 23 is an N6-acetyllysine (Lys-23). Thr-34 carries the post-translational modification Phosphothreonine; by CDK1 and CDK15. Position 48 is a phosphothreonine (Thr-48). Residues Cys-57, Cys-60, His-77, and Cys-84 each coordinate Zn(2+). Residues Lys-90, Lys-110, Lys-112, and Lys-115 each carry the N6-acetyllysine modification. Thr-117 carries the phosphothreonine; by AURKB modification. Lys-129 is subject to N6-acetyllysine.

This sequence belongs to the IAP family. Monomer or homodimer. Exists as a homodimer in the apo state and as a monomer in the CPC-bound state. The monomer protects cells against apoptosis more efficiently than the dimer. Only the dimeric form is capable of enhancing tubulin stability in cells. When phosphorylated, interacts with LAMTOR5/HBXIP; the resulting complex binds pro-CASP9, as well as active CASP9, but much less efficiently. Component of the chromosomal passenger complex (CPC) composed of at least BIRC5/survivin, CDCA8/borealin, INCENP, AURKB or AURKC; in the complex forms a triple-helix bundle-based subcomplex with INCENP and CDCA8. Interacts with JTB. Interacts (via BIR domain) with histone H3 phosphorylated at 'Thr-3' (H3pT3). Interacts with EVI5. Interacts with GTP-bound RAN in both the S and M phases of the cell cycle. Interacts with USP9X. Interacts with tubulin. Interacts with BIRC2/c-IAP1. The acetylated form at Lys-129 interacts with STAT3. The monomeric form deacetylated at Lys-129 interacts with XPO1/CRM1. The monomeric form interacts with XIAP/BIRC4. Both the dimeric and monomeric form can interact with DIABLO/SMAC. Interacts with BIRC6/bruce. Interacts with FBXL7; this interaction facilitates the polyubiquitination and subsequent proteasomal degradation of BIRC5 by the SCF(FBXL7) E3 ubiquitin-protein ligase complex. Ubiquitinated by the Cul9-RING ubiquitin-protein ligase complex, leading to its degradation. Ubiquitination is required for centrosomal targeting. Deubiquitinated by USP35 or USP38; leading to stabilization. In terms of processing, acetylation at Lys-129 results in its homodimerization, while deacetylation promotes the formation of monomers which heterodimerize with XPO1/CRM1 which facilitates its nuclear export. The acetylated form represses STAT3 transactivation. The dynamic equilibrium between its acetylation and deacetylation at Lys-129 determines its interaction with XPO1/CRM1, its subsequent subcellular localization, and its ability to inhibit STAT3 transactivation. Post-translationally, in vitro phosphorylation at Thr-117 by AURKB prevents interaction with INCENP and localization to mitotic chromosomes. Phosphorylation at Thr-48 by CK2 is critical for its mitotic and anti-apoptotic activities. Phosphorylation at Thr-34 by CDK15 is critical for its anti-apoptotic activity. Phosphorylation at Ser-20 by AURKC is critical for regulation of proper chromosome alignment and segregation, and possibly cytokinesis.

It localises to the cytoplasm. The protein resides in the nucleus. The protein localises to the chromosome. Its subcellular location is the centromere. It is found in the cytoskeleton. It localises to the spindle. The protein resides in the kinetochore. The protein localises to the midbody. Its function is as follows. Multitasking protein that has dual roles in promoting cell proliferation and preventing apoptosis. Component of a chromosome passage protein complex (CPC) which is essential for chromosome alignment and segregation during mitosis and cytokinesis. Acts as an important regulator of the localization of this complex; directs CPC movement to different locations from the inner centromere during prometaphase to midbody during cytokinesis and participates in the organization of the center spindle by associating with polymerized microtubules. Involved in the recruitment of CPC to centromeres during early mitosis via association with histone H3 phosphorylated at 'Thr-3' (H3pT3) during mitosis. The complex with RAN plays a role in mitotic spindle formation by serving as a physical scaffold to help deliver the RAN effector molecule TPX2 to microtubules. May counteract a default induction of apoptosis in G2/M phase. The acetylated form represses STAT3 transactivation of target gene promoters. May play a role in neoplasia. Inhibitor of CASP3 and CASP7. Essential for the maintenance of mitochondrial integrity and function. The protein is Baculoviral IAP repeat-containing protein 5 (BIRC5) of Canis lupus familiaris (Dog).